A 199-amino-acid polypeptide reads, in one-letter code: 5'-deoxynucleotidase YfbR (199 aa).

Substrate-binding positions include 18–19 (RW) and His33. The region spanning 30–142 (VSEHSLQVAM…VKQADALCAY (113 aa)) is the HD domain. Residues His33, His68, and Asp69 each coordinate a divalent metal cation. Residues Asp69, 77 to 80 (DLPT), and Asp137 each bind substrate. Position 137 (Asp137) interacts with a divalent metal cation.

The protein belongs to the 5DNU family. Homodimer. Requires a divalent metal cation as cofactor.

The protein localises to the cytoplasm. The catalysed reaction is a 2'-deoxyribonucleoside 5'-phosphate + H2O = a 2'-deoxyribonucleoside + phosphate. Its function is as follows. Catalyzes the strictly specific dephosphorylation of 2'-deoxyribonucleoside 5'-monophosphates. In Salmonella typhi, this protein is 5'-deoxynucleotidase YfbR.